Consider the following 236-residue polypeptide: Orotidine 5'-phosphate decarboxylase (236 aa).

Substrate-binding positions include aspartate 17, lysine 39, 66–75, threonine 125, arginine 187, glutamine 196, glycine 216, and arginine 217; that span reads DLKFYDIPNT. Lysine 68 acts as the Proton donor in catalysis.

It belongs to the OMP decarboxylase family. Type 1 subfamily. As to quaternary structure, homodimer.

It catalyses the reaction orotidine 5'-phosphate + H(+) = UMP + CO2. Its pathway is pyrimidine metabolism; UMP biosynthesis via de novo pathway; UMP from orotate: step 2/2. Its function is as follows. Catalyzes the decarboxylation of orotidine 5'-monophosphate (OMP) to uridine 5'-monophosphate (UMP). The chain is Orotidine 5'-phosphate decarboxylase from Buchnera aphidicola subsp. Baizongia pistaciae (strain Bp).